Reading from the N-terminus, the 356-residue chain is tRNA N6-adenosine threonylcarbamoyltransferase (356 aa).

The Fe cation site is built by histidine 115 and histidine 119. Substrate-binding positions include 138 to 142 (LVSGG), aspartate 171, glycine 184, and asparagine 283. Aspartate 311 lines the Fe cation pocket.

It belongs to the KAE1 / TsaD family. Fe(2+) is required as a cofactor.

Its subcellular location is the cytoplasm. It carries out the reaction L-threonylcarbamoyladenylate + adenosine(37) in tRNA = N(6)-L-threonylcarbamoyladenosine(37) in tRNA + AMP + H(+). Its function is as follows. Required for the formation of a threonylcarbamoyl group on adenosine at position 37 (t(6)A37) in tRNAs that read codons beginning with adenine. Is involved in the transfer of the threonylcarbamoyl moiety of threonylcarbamoyl-AMP (TC-AMP) to the N6 group of A37, together with TsaE and TsaB. TsaD likely plays a direct catalytic role in this reaction. The sequence is that of tRNA N6-adenosine threonylcarbamoyltransferase from Synechococcus sp. (strain WH7803).